Consider the following 506-residue polypeptide: UDP-N-acetylmuramoyl-L-alanyl-D-glutamate--2,6-diaminopimelate ligase (506 aa).

Residue Ser42 coordinates UDP-N-acetyl-alpha-D-muramoyl-L-alanyl-D-glutamate. 125-131 serves as a coordination point for ATP; that stretch reads GTSGKTT. UDP-N-acetyl-alpha-D-muramoyl-L-alanyl-D-glutamate-binding positions include 166 to 167, Ser193, and Arg201; that span reads TT. N6-carboxylysine is present on Lys233. Meso-2,6-diaminopimelate-binding positions include Arg395, 419–422, Gly475, and Glu479; that span reads DNPR. The short motif at 419–422 is the Meso-diaminopimelate recognition motif element; that stretch reads DNPR.

This sequence belongs to the MurCDEF family. MurE subfamily. Requires Mg(2+) as cofactor. In terms of processing, carboxylation is probably crucial for Mg(2+) binding and, consequently, for the gamma-phosphate positioning of ATP.

Its subcellular location is the cytoplasm. The catalysed reaction is UDP-N-acetyl-alpha-D-muramoyl-L-alanyl-D-glutamate + meso-2,6-diaminopimelate + ATP = UDP-N-acetyl-alpha-D-muramoyl-L-alanyl-gamma-D-glutamyl-meso-2,6-diaminopimelate + ADP + phosphate + H(+). Its pathway is cell wall biogenesis; peptidoglycan biosynthesis. In terms of biological role, catalyzes the addition of meso-diaminopimelic acid to the nucleotide precursor UDP-N-acetylmuramoyl-L-alanyl-D-glutamate (UMAG) in the biosynthesis of bacterial cell-wall peptidoglycan. The protein is UDP-N-acetylmuramoyl-L-alanyl-D-glutamate--2,6-diaminopimelate ligase of Streptomyces coelicolor (strain ATCC BAA-471 / A3(2) / M145).